We begin with the raw amino-acid sequence, 177 residues long: Thymidine kinase (177 aa).

11-18 serves as a coordination point for ATP; sequence GPMFSGKS. Residue E83 is the Proton acceptor of the active site. F113 is a substrate binding site. C138 and C141 together coordinate Zn(2+). 157–161 contacts substrate; the sequence is IELIG. Zn(2+)-binding residues include C170 and C173.

The protein belongs to the thymidine kinase family.

The enzyme catalyses thymidine + ATP = dTMP + ADP + H(+). The sequence is that of Thymidine kinase (TK) from Sheeppox virus (strain KS-1) (SPPV).